The chain runs to 89 residues: Small ribosomal subunit protein bS20 (89 aa).

The span at 1 to 12 (MANHKSAIKRHR) shows a compositional bias: basic residues. A disordered region spans residues 1-26 (MANHKSAIKRHRQSVERAGRNRAART).

Belongs to the bacterial ribosomal protein bS20 family.

In terms of biological role, binds directly to 16S ribosomal RNA. This chain is Small ribosomal subunit protein bS20, found in Desulfovibrio desulfuricans (strain ATCC 27774 / DSM 6949 / MB).